A 1074-amino-acid chain; its full sequence is MADSRNGNARAPPSGVPPKAGNTYSIDVKNFISRARALYEHWKKHSADLWGSADALAIATPPASDDLRYLKSSALNIWLLGYEFPDTIMVFTKKQIHFLCSRNKASLLEVVKKPAHDELKLDVIMHVKPKGDDGTGLMDAIFRAIRDLSRGDGNDSQVVGHIAREAPEGKLLETWTERLKNANFQFVDITGGLSDLFAVKDDTEVMSVKKAAYLAYSVMKNVVVPNLESAIDEEKDVTHSALMDLTEKAILEPTKASVKLKPENVDICYPPIFQSGGKFDLKPSAASNDELLTYDPASIIICAVGARYNSYCSNVARTYLIDATSLQSKAYEVLLKAHEAAIDALRSGRKINTVYQAALSVVEKNAPEFVDKLTKSAGTGIGLEFRESGLNINAKNDKVLRPKMAFNVSLGFQNLECESESRSKNKKFSLLLADTVLVTDQKPELLTKCSKSVKDVAYSFKEDEEEEKPRKKARTSGSENYITKTALRSDDHVVSKEELRKQHQAELARQKNEETARRLAGDSSGAGDSRSTAKTSADVVAYKNVNDMPHKELMIQVDTRNEAVLLPIYGSLVPFHVATIRTVSGNQDTNRNCYIRIIFNVPGTPFNPHDSNSLKNQGAIYLKEVSFRTKDSRHSSEVTQQIKTLRRQVMARESERAERATLVTQEKLQLAGNKFKPLRLSELWIRPPFSGRKKIPGTLEAHANGFRYSTTRPDERVDVLFANIKHAFFQPAEKEMITLLHFHLHNHIMVGTKKTKDVQFYVEVMDVVQSLGGGRRSAYDPDEIDEEQRERDRKNKINMDFNHFANRVNDMWQLPQFASLDLEFDQPLRELGFHGVPHKTSAFIIPTSSCLVELIEYPFLVVSLSEIEIVNLERVGFGQKNFDMAIIFKDFKKDVLRVDSVPTSSLEGIKEWLDTTDIKYYESKLNLNWRQILKTITDDPQSFIDDGGWEFLNLDGSDSESGGSEESDKGYEPSDVEVESESEDEASESESLVESDDDEEEDSEQESEEEKGKTWDELEREATNADREHGVESDSEEERKRRKMKAFGKSRPGTSGGGGSSSMKNMPPSKRKHR.

2 disordered regions span residues 1–21 (MADSRNGNARAPPSGVPPKAG) and 505–534 (AELARQKNEETARRLAGDSSGAGDSRSTAK). 3 coiled-coil regions span residues 493 to 520 (VVSKEELRKQHQAELARQKNEETARRLA), 637 to 658 (EVTQQIKTLRRQVMARESERAE), and 782 to 802 (DEIDEEQRERDRKNKINMDFN). The segment covering 505 to 520 (AELARQKNEETARRLA) has biased composition (basic and acidic residues). Residues 954–1074 (LDGSDSESGG…NMPPSKRKHR (121 aa)) form a disordered region. Residues 955-964 (DGSDSESGGS) show a composition bias toward low complexity. Positions 974 to 1009 (SDVEVESESEDEASESESLVESDDDEEEDSEQESEE) are enriched in acidic residues. Positions 1010-1032 (EKGKTWDELEREATNADREHGVE) are enriched in basic and acidic residues.

Belongs to the peptidase M24 family. SPT16 subfamily. As to quaternary structure, component of the FACT complex, a stable heterodimer of SPT16 and SSRP. In terms of tissue distribution, widely expressed. Present in embryos, shoots and roots, whereas it is not present in terminally differentiated cells such as mature trichoblasts or cells of the root cap (at protein level).

The protein resides in the nucleus. It localises to the chromosome. Its function is as follows. Component of the FACT complex, a general chromatin factor that acts to reorganize nucleosomes. The FACT complex is involved in multiple processes that require DNA as a template such as mRNA elongation, DNA replication and DNA repair. During transcription elongation the FACT complex acts as a histone chaperone that both destabilizes and restores nucleosomal structure. It facilitates the passage of RNA polymerase II and transcription by promoting the dissociation of one histone H2A-H2B dimer from the nucleosome, then subsequently promotes the reestablishment of the nucleosome following the passage of RNA polymerase II. This Arabidopsis thaliana (Mouse-ear cress) protein is FACT complex subunit SPT16 (SPT16).